The primary structure comprises 277 residues: Large ribosomal subunit protein uL2 (277 aa).

The tract at residues 222–277 (GVAMNPVDHPHGGGEGRTSGGRHPVTPWGKPTKGKKTRSNKATDKFIMRSRHQRKK) is disordered.

Belongs to the universal ribosomal protein uL2 family. Part of the 50S ribosomal subunit. Forms a bridge to the 30S subunit in the 70S ribosome.

One of the primary rRNA binding proteins. Required for association of the 30S and 50S subunits to form the 70S ribosome, for tRNA binding and peptide bond formation. It has been suggested to have peptidyltransferase activity; this is somewhat controversial. Makes several contacts with the 16S rRNA in the 70S ribosome. This Brucella melitensis biotype 1 (strain ATCC 23456 / CCUG 17765 / NCTC 10094 / 16M) protein is Large ribosomal subunit protein uL2.